The sequence spans 279 residues: Pleckstrin homology domain-containing family F member 1 (279 aa).

The PH domain occupies 35–131 (VLLGEGVLTK…WISHIEECVR (97 aa)). The segment at 152 to 212 (DKATDICMRC…VCSLCYRELA (61 aa)) adopts an FYVE-type zinc-finger fold. Zn(2+) contacts are provided by C158, C161, C175, C178, C183, C186, C204, and C207. The interval 218-264 (EEAEEQGAGSPGQPAHLARPICGASSGDDDDSDEDKEGSRDGDWPSS) is disordered. Residues 244–253 (GDDDDSDEDK) show a composition bias toward acidic residues.

Highly expressed in heart and skeletal muscle. Weakly expressed in brain, thymus, spleen, kidney, liver, small intestine, placenta and lung.

The protein resides in the nucleus. It is found in the cytoplasm. Its subcellular location is the perinuclear region. It localises to the lysosome. May induce apoptosis through the lysosomal-mitochondrial pathway. Translocates to the lysosome initiating the permeabilization of lysosomal membrane (LMP) and resulting in the release of CTSD and CTSL to the cytoplasm. Triggers the caspase-independent apoptosis by altering mitochondrial membrane permeabilization (MMP) resulting in the release of PDCD8. This chain is Pleckstrin homology domain-containing family F member 1 (PLEKHF1), found in Homo sapiens (Human).